The following is a 428-amino-acid chain: Adenylosuccinate synthetase (428 aa).

Residues 12 to 18 (GDEGKGK) and 40 to 42 (GHT) contribute to the GTP site. Catalysis depends on D13, which acts as the Proton acceptor. Residues D13 and G40 each contribute to the Mg(2+) site. IMP-binding positions include 13 to 16 (DEGK), 38 to 41 (NAGH), T128, R142, Q223, T238, and R302. The active-site Proton donor is the H41. Residue 298–304 (TTTGRPR) participates in substrate binding. GTP is bound by residues R304, 330–332 (KLD), and 412–414 (SVG).

This sequence belongs to the adenylosuccinate synthetase family. As to quaternary structure, homodimer. Mg(2+) serves as cofactor.

The protein resides in the cytoplasm. It catalyses the reaction IMP + L-aspartate + GTP = N(6)-(1,2-dicarboxyethyl)-AMP + GDP + phosphate + 2 H(+). The protein operates within purine metabolism; AMP biosynthesis via de novo pathway; AMP from IMP: step 1/2. Its function is as follows. Plays an important role in the de novo pathway of purine nucleotide biosynthesis. Catalyzes the first committed step in the biosynthesis of AMP from IMP. The sequence is that of Adenylosuccinate synthetase from Brevibacillus brevis (strain 47 / JCM 6285 / NBRC 100599).